We begin with the raw amino-acid sequence, 481 residues long: MADTITPREEDYSQWYIDLVRSAKLADYSDVRGCMVIRPNGYAIWEKMQAALDGMFKATGHVNAYFPLFIPESYIQKEADHIEGFAPECAVVTHGGGEELAEKLYVRPTSETVIWASYKKWIQSYRDLPLLINQWANVVRWEMRTRLFLRTSEFLWQEGHTAHATPEEAQDEVLRMINVYKTFAEEYMAMPVLIGRKTDSEKFAGADETWCIEAMMQDKKALQAGTSHNLGQNFAKAFDCQFQSKNGTLEYVWATSWGVSTRLIGALIMAHSDDRGLVLPPKLASRQVVIVPILRGDKQAVAEKAHALADELNSNGIHAFVDDSEQNSPGWKFAEYELQGIPVRLEIGPRDISSNICIAARRDTGEKQQIALDDTFAASISSLLDAIQQSMFKSALEFREANTREVSSYDEFKKCIDKGFLIAHWDGREETEAKIKEETKATIRLIPEDPDFRKKYSMDEPGICICSGNPSKGKVVFAKAY.

The protein belongs to the class-II aminoacyl-tRNA synthetase family. ProS type 3 subfamily. In terms of assembly, homodimer.

The protein resides in the cytoplasm. The catalysed reaction is tRNA(Pro) + L-proline + ATP = L-prolyl-tRNA(Pro) + AMP + diphosphate. Catalyzes the attachment of proline to tRNA(Pro) in a two-step reaction: proline is first activated by ATP to form Pro-AMP and then transferred to the acceptor end of tRNA(Pro). This is Proline--tRNA ligase from Chlorobium phaeobacteroides (strain BS1).